The chain runs to 165 residues: PTS system glucose-specific EIIA component (165 aa).

Positions 33–137 (DPVFAGRMMG…STITPIVITN (105 aa)) constitute a PTS EIIA type-1 domain. 2 residues coordinate Zn(2+): His-70 and His-85. The Tele-phosphohistidine intermediate; for EIIA activity role is filled by His-85. His-85 bears the Phosphohistidine; by HPr mark.

Heterodimer with glycerol kinase (glpk). It depends on Zn(2+) as a cofactor.

The protein localises to the cytoplasm. In terms of biological role, the phosphoenolpyruvate-dependent sugar phosphotransferase system (sugar PTS), a major carbohydrate active transport system, catalyzes the phosphorylation of incoming sugar substrates concomitantly with their translocation across the cell membrane. The enzyme II complex composed of PtsG and Crr is involved in glucose transport. The protein is PTS system glucose-specific EIIA component (crr) of Bacillus anthracis.